A 157-amino-acid chain; its full sequence is MRCSNCQNKNTKVLDSRPIEEGRAIRRRRECERCGFRFTTFERIEEVPLIVVKKDGVRQEFSREKLMRGLIRACEKRPVALETIESIALEVEKKLRNAGNPEVSSNSIGEMVMELLSKVDEVSYVRFASVYRQFKDITVFLDELKDIINTDKSMKDK.

Residues 3-34 (CSNCQNKNTKVLDSRPIEEGRAIRRRRECERC) fold into a zinc finger. Positions 49 to 139 (LIVVKKDGVR…VYRQFKDITV (91 aa)) constitute an ATP-cone domain.

Belongs to the NrdR family. It depends on Zn(2+) as a cofactor.

In terms of biological role, negatively regulates transcription of bacterial ribonucleotide reductase nrd genes and operons by binding to NrdR-boxes. The sequence is that of Transcriptional repressor NrdR from Oceanobacillus iheyensis (strain DSM 14371 / CIP 107618 / JCM 11309 / KCTC 3954 / HTE831).